The chain runs to 486 residues: Membrane-bound lytic murein transglycosylase F (486 aa).

A signal peptide spans 1-21; that stretch reads MTRIKLNYFVIGVVALLLALA. Residues 22–268 are non-LT domain; the sequence is LWPNIPWRNG…RLEEKYLGHV (247 aa). The tract at residues 269–486 is LT domain; sequence GSFDYVDTKT…VVGPGWSINN (218 aa). Residue Glu313 is part of the active site.

It in the N-terminal section; belongs to the bacterial solute-binding protein 3 family. In the C-terminal section; belongs to the transglycosylase Slt family.

The protein localises to the cell outer membrane. It catalyses the reaction Exolytic cleavage of the (1-&gt;4)-beta-glycosidic linkage between N-acetylmuramic acid (MurNAc) and N-acetylglucosamine (GlcNAc) residues in peptidoglycan, from either the reducing or the non-reducing ends of the peptidoglycan chains, with concomitant formation of a 1,6-anhydrobond in the MurNAc residue.. Murein-degrading enzyme that degrades murein glycan strands and insoluble, high-molecular weight murein sacculi, with the concomitant formation of a 1,6-anhydromuramoyl product. Lytic transglycosylases (LTs) play an integral role in the metabolism of the peptidoglycan (PG) sacculus. Their lytic action creates space within the PG sacculus to allow for its expansion as well as for the insertion of various structures such as secretion systems and flagella. The chain is Membrane-bound lytic murein transglycosylase F from Yersinia enterocolitica serotype O:8 / biotype 1B (strain NCTC 13174 / 8081).